Here is a 136-residue protein sequence, read N- to C-terminus: Protein K5 (136 aa).

Belongs to the poxviridae K5 protein family.

The polypeptide is Protein K5 (Homo sapiens (Human)).